The following is a 503-amino-acid chain: Maturase K (503 aa).

Belongs to the intron maturase 2 family. MatK subfamily.

The protein localises to the plastid. It is found in the chloroplast. Functionally, usually encoded in the trnK tRNA gene intron. Probably assists in splicing its own and other chloroplast group II introns. The sequence is that of Maturase K from Vicia faba (Broad bean).